A 295-amino-acid polypeptide reads, in one-letter code: Zinc finger transcription factor pqm-1 (295 aa).

A disordered region spans residues 1 to 23 (MSFLNNDFGSPPATSSPPTTMPK). Positions 10–22 (SPPATSSPPTTMP) are enriched in low complexity. The C2H2-type 1; degenerate zinc finger occupies 161 to 183 (YMCTVCRKVYGRYNSVSYHVTIY). The segment at 227-249 (RKCPHCRHVSKSPAMLEKHIRRH) adopts a C2H2-type 2 zinc-finger fold.

This sequence belongs to the krueppel C2H2-type zinc-finger protein family. Interacts with ceh-60.

The protein resides in the chromosome. The protein localises to the nucleus. Its subcellular location is the cytoplasm. Zinc finger transcription factor which acts as both a transcriptional activator and repressor. Binds to the promoters of genes that contain the 5'-CTTATCA-3' DNA consensus sequence in their regulatory region. Functions downstream of the Insulin/IGF-1-like signaling (IIS) mediated pathway. Involved in normal development, lifespan, stress response, lipid metabolism, innate immunity and exit from the developmentally arrested larval state known as dauer. Required for stress-induced expression of hsp-90 and resistance to heat stress, perhaps as part of a systemic stress signaling pathway. Involved in maintenance of proteostasis. Under hypoxic stress increases lipid levels by positively regulating fatty acid synthesis via fat-7 expression. Associates with homeobox protein ceh-60 at the promoters of some stress-responsive genes to regulate expression; may require phosphorylation for transcriptional repression activity. Acts downstream of nhr-14 to activate transcription of intestinal metal transporter smf-3, modulating innate immunity and iron uptake. May act downstream of the mTORC2 signaling mediated pathway. May act in a mutually exclusive manner with the FOXO transcription factor daf-16. This Caenorhabditis elegans protein is Zinc finger transcription factor pqm-1.